The following is a 204-amino-acid chain: Casparian strip membrane protein 2 (204 aa).

At methionine 1–glycine 42 the chain is on the cytoplasmic side. Residues leucine 43–alanine 63 form a helical membrane-spanning segment. At threonine 64–glutamine 92 the chain is on the extracellular side. Residues phenylalanine 93–valine 113 form a helical membrane-spanning segment. Residues valine 114 to arginine 125 are Cytoplasmic-facing. Residues leucine 126–alanine 146 form a helical membrane-spanning segment. The Extracellular segment spans residues alanine 147–glycine 178. A helical transmembrane segment spans residues alanine 179–valine 199. The Cytoplasmic portion of the chain corresponds to alanine 200 to histidine 204.

Belongs to the Casparian strip membrane proteins (CASP) family. Homodimer and heterodimers.

The protein localises to the cell membrane. In terms of biological role, regulates membrane-cell wall junctions and localized cell wall deposition. Required for establishment of the Casparian strip membrane domain (CSD) and the subsequent formation of Casparian strips, a cell wall modification of the root endodermis that determines an apoplastic barrier between the intraorganismal apoplasm and the extraorganismal apoplasm and prevents lateral diffusion. The sequence is that of Casparian strip membrane protein 2 from Arabidopsis lyrata subsp. lyrata (Lyre-leaved rock-cress).